The sequence spans 185 residues: Elongation factor P (185 aa).

This sequence belongs to the elongation factor P family.

The protein localises to the cytoplasm. It functions in the pathway protein biosynthesis; polypeptide chain elongation. Functionally, involved in peptide bond synthesis. Stimulates efficient translation and peptide-bond synthesis on native or reconstituted 70S ribosomes in vitro. Probably functions indirectly by altering the affinity of the ribosome for aminoacyl-tRNA, thus increasing their reactivity as acceptors for peptidyl transferase. In Burkholderia lata (strain ATCC 17760 / DSM 23089 / LMG 22485 / NCIMB 9086 / R18194 / 383), this protein is Elongation factor P.